Here is a 296-residue protein sequence, read N- to C-terminus: Bifunctional protein FolD 1 (296 aa).

Residues 167–169 and I235 each bind NADP(+); that span reads GCG.

The protein belongs to the tetrahydrofolate dehydrogenase/cyclohydrolase family. In terms of assembly, homodimer.

The catalysed reaction is (6R)-5,10-methylene-5,6,7,8-tetrahydrofolate + NADP(+) = (6R)-5,10-methenyltetrahydrofolate + NADPH. The enzyme catalyses (6R)-5,10-methenyltetrahydrofolate + H2O = (6R)-10-formyltetrahydrofolate + H(+). It participates in one-carbon metabolism; tetrahydrofolate interconversion. Catalyzes the oxidation of 5,10-methylenetetrahydrofolate to 5,10-methenyltetrahydrofolate and then the hydrolysis of 5,10-methenyltetrahydrofolate to 10-formyltetrahydrofolate. This Nocardioides sp. (strain ATCC BAA-499 / JS614) protein is Bifunctional protein FolD 1.